The following is a 353-amino-acid chain: Photosystem II protein D1 (353 aa).

T2 is subject to N-acetylthreonine. T2 is modified (phosphothreonine). 3 helical membrane-spanning segments follow: residues 29 to 46 (YIGWFGVIMIPCLLTAIS), 118 to 133 (HFLLGIACYMGREWEL), and 142 to 156 (WIAVAYSAPVAAATA). Residue H118 coordinates chlorophyll a. A pheophytin a-binding site is contributed by Y126. 2 residues coordinate [CaMn4O5] cluster: D170 and E189. A helical membrane pass occupies residues 197 to 218 (FHMLGVAGVFGGSLFSAMHGSL). Chlorophyll a is bound at residue H198. A quinone-binding positions include H215 and 264-265 (SF). H215 lines the Fe cation pocket. H272 contacts Fe cation. The helical transmembrane segment at 274–288 (FLAVWPVVGIWFTAM) threads the bilayer. [CaMn4O5] cluster contacts are provided by H332, E333, D342, and A344. Positions 345-353 (SVEAPAVNG) are excised as a propeptide.

This sequence belongs to the reaction center PufL/M/PsbA/D family. In terms of assembly, PSII is composed of 1 copy each of membrane proteins PsbA, PsbB, PsbC, PsbD, PsbE, PsbF, PsbH, PsbI, PsbJ, PsbK, PsbL, PsbM, PsbT, PsbX, PsbY, PsbZ, Psb30/Ycf12, at least 3 peripheral proteins of the oxygen-evolving complex and a large number of cofactors. It forms dimeric complexes. The D1/D2 heterodimer binds P680, chlorophylls that are the primary electron donor of PSII, and subsequent electron acceptors. It shares a non-heme iron and each subunit binds pheophytin, quinone, additional chlorophylls, carotenoids and lipids. D1 provides most of the ligands for the Mn4-Ca-O5 cluster of the oxygen-evolving complex (OEC). There is also a Cl(-1) ion associated with D1 and D2, which is required for oxygen evolution. The PSII complex binds additional chlorophylls, carotenoids and specific lipids. serves as cofactor. In terms of processing, tyr-161 forms a radical intermediate that is referred to as redox-active TyrZ, YZ or Y-Z. Post-translationally, C-terminally processed by CTPA; processing is essential to allow assembly of the oxygen-evolving complex and thus photosynthetic growth.

It localises to the plastid. The protein localises to the chloroplast thylakoid membrane. The catalysed reaction is 2 a plastoquinone + 4 hnu + 2 H2O = 2 a plastoquinol + O2. Photosystem II (PSII) is a light-driven water:plastoquinone oxidoreductase that uses light energy to abstract electrons from H(2)O, generating O(2) and a proton gradient subsequently used for ATP formation. It consists of a core antenna complex that captures photons, and an electron transfer chain that converts photonic excitation into a charge separation. The D1/D2 (PsbA/PsbD) reaction center heterodimer binds P680, the primary electron donor of PSII as well as several subsequent electron acceptors. This chain is Photosystem II protein D1, found in Mesostigma viride (Green alga).